The following is a 155-amino-acid chain: Ribosomal RNA large subunit methyltransferase H (155 aa).

S-adenosyl-L-methionine is bound by residues L72, G103, and 122–127 (FGRMVW).

Belongs to the RNA methyltransferase RlmH family. As to quaternary structure, homodimer.

The protein localises to the cytoplasm. It catalyses the reaction pseudouridine(1915) in 23S rRNA + S-adenosyl-L-methionine = N(3)-methylpseudouridine(1915) in 23S rRNA + S-adenosyl-L-homocysteine + H(+). In terms of biological role, specifically methylates the pseudouridine at position 1915 (m3Psi1915) in 23S rRNA. The polypeptide is Ribosomal RNA large subunit methyltransferase H (Cereibacter sphaeroides (strain ATCC 17023 / DSM 158 / JCM 6121 / CCUG 31486 / LMG 2827 / NBRC 12203 / NCIMB 8253 / ATH 2.4.1.) (Rhodobacter sphaeroides)).